The following is a 231-amino-acid chain: Large ribosomal subunit protein uL1 (231 aa).

This sequence belongs to the universal ribosomal protein uL1 family. As to quaternary structure, part of the 50S ribosomal subunit.

In terms of biological role, binds directly to 23S rRNA. The L1 stalk is quite mobile in the ribosome, and is involved in E site tRNA release. Protein L1 is also a translational repressor protein, it controls the translation of the L11 operon by binding to its mRNA. The sequence is that of Large ribosomal subunit protein uL1 from Neisseria meningitidis serogroup A / serotype 4A (strain DSM 15465 / Z2491).